Here is a 341-residue protein sequence, read N- to C-terminus: Cytoplasmic tRNA 2-thiolation protein 1 (341 aa).

This sequence belongs to the TtcA family. CTU1/NCS6/ATPBD3 subfamily.

Its subcellular location is the cytoplasm. It functions in the pathway tRNA modification; 5-methoxycarbonylmethyl-2-thiouridine-tRNA biosynthesis. Plays a central role in 2-thiolation of mcm(5)S(2)U at tRNA wobble positions of tRNA(Lys), tRNA(Glu) and tRNA(Gln). Directly binds tRNAs and probably acts by catalyzing adenylation of tRNAs, an intermediate required for 2-thiolation. It is unclear whether it acts as a sulfurtransferase that transfers sulfur from thiocarboxylated URM1 onto the uridine of tRNAs at wobble position. The chain is Cytoplasmic tRNA 2-thiolation protein 1 from Aedes aegypti (Yellowfever mosquito).